Reading from the N-terminus, the 741-residue chain is Transketolase-1, chloroplastic (741 aa).

Residues Met1–Ala66 constitute a chloroplast transit peptide. Residues Gly22 to Ala51 are disordered. The residue at position 67 (Ala67) is an N-acetylalanine. His103 provides a ligand contact to substrate. Thiamine diphosphate-binding positions include His143 and Gly192–Leu194. Asp233 contributes to the Mg(2+) binding site. Gly234 and Asn263 together coordinate thiamine diphosphate. The Mg(2+) site is built by Asn263 and Ile265. His340 contacts substrate. Thiamine diphosphate is bound at residue His340. Ser428 carries the post-translational modification Phosphoserine. Residues Arg434 and Ser461 each coordinate substrate. Positions 488 and 515 each coordinate thiamine diphosphate. The Proton donor role is filled by Glu488. The substrate site is built by His539, Asp547, and Arg598.

The protein belongs to the transketolase family. Homodimer. Mg(2+) is required as a cofactor. It depends on Ca(2+) as a cofactor. Mn(2+) serves as cofactor. Requires Co(2+) as cofactor. The cofactor is thiamine diphosphate.

It is found in the plastid. Its subcellular location is the chloroplast stroma. It carries out the reaction D-sedoheptulose 7-phosphate + D-glyceraldehyde 3-phosphate = aldehydo-D-ribose 5-phosphate + D-xylulose 5-phosphate. The protein operates within carbohydrate biosynthesis; Calvin cycle. In terms of biological role, catalyzes the reversible transfer of a two-carbon ketol group from fructose-6-phosphate or sedoheptulose-7-phosphate to glyceraldehyde-3-phosphate to yield xylulose-5-phosphate and erythrose-4-phosphate or ribose-5-phosphate, respectively. Could act as a stress sensor involved in adaptation process. The sequence is that of Transketolase-1, chloroplastic (TKL-1) from Arabidopsis thaliana (Mouse-ear cress).